Here is a 540-residue protein sequence, read N- to C-terminus: IQ motif and ankyrin repeat domain-containing protein 1 (540 aa).

Positions 1 to 17 (MSTKKGGPKAASGKGQA) are enriched in low complexity. The segment at 1–62 (MSTKKGGPKA…PQAPAAPTAE (62 aa)) is disordered. Residues 62-91 (EDKAAIVIQCAFRQYLARRELARRCQERQE) enclose the IQ domain. 2 ANK repeats span residues 191–220 (HGNT…NPNT) and 224–253 (FGRT…DPRM). Positions 281-388 (LTEAMLKNME…EETLAMARLE (108 aa)) form a coiled coil.

This is IQ motif and ankyrin repeat domain-containing protein 1 from Mus musculus (Mouse).